Consider the following 337-residue polypeptide: 4-hydroxythreonine-4-phosphate dehydrogenase (337 aa).

The substrate site is built by histidine 137 and threonine 138. The a divalent metal cation site is built by histidine 167, histidine 212, and histidine 267. Substrate contacts are provided by lysine 275, asparagine 284, and arginine 293.

Belongs to the PdxA family. Homodimer. The cofactor is Zn(2+). Mg(2+) serves as cofactor. It depends on Co(2+) as a cofactor.

The protein localises to the cytoplasm. It catalyses the reaction 4-(phosphooxy)-L-threonine + NAD(+) = 3-amino-2-oxopropyl phosphate + CO2 + NADH. The protein operates within cofactor biosynthesis; pyridoxine 5'-phosphate biosynthesis; pyridoxine 5'-phosphate from D-erythrose 4-phosphate: step 4/5. In terms of biological role, catalyzes the NAD(P)-dependent oxidation of 4-(phosphooxy)-L-threonine (HTP) into 2-amino-3-oxo-4-(phosphooxy)butyric acid which spontaneously decarboxylates to form 3-amino-2-oxopropyl phosphate (AHAP). In Ectopseudomonas mendocina (strain ymp) (Pseudomonas mendocina), this protein is 4-hydroxythreonine-4-phosphate dehydrogenase.